The following is a 149-amino-acid chain: UPF0178 protein SE_0451 (149 aa).

This sequence belongs to the UPF0178 family.

The protein is UPF0178 protein SE_0451 of Staphylococcus epidermidis (strain ATCC 12228 / FDA PCI 1200).